The following is a 364-amino-acid chain: ATP synthase gamma chain, chloroplastic (364 aa).

The N-terminal 41 residues, 1 to 41 (MACSLSFSSSVSTFHLPTTTQSTQAPPNNATTLPTTNPIQC), are a transit peptide targeting the chloroplast. The segment at 17-36 (PTTTQSTQAPPNNATTLPTT) is disordered. Low complexity predominate over residues 25-36 (APPNNATTLPTT). Cys-130 is an active-site residue. Cys-240 and Cys-246 form a disulfide bridge.

This sequence belongs to the ATPase gamma chain family. As to quaternary structure, F-type ATPases have 2 components, CF(1) - the catalytic core - and CF(0) - the membrane proton channel. CF(1) has five subunits: alpha(3), beta(3), gamma(1), delta(1), epsilon(1). CF(0) has four main subunits: a, b, b' and c. Disulfide bond; Cys-240 and Cys-246 are known to form a disulfide bridge in the dark which gives rise to an inactive enzyme. Activation can be brought about by a ferredoxin-dependent reduction of the disulfide bond in the light.

It is found in the plastid. The protein resides in the chloroplast thylakoid membrane. Functionally, produces ATP from ADP in the presence of a proton gradient across the membrane. The gamma chain is believed to be important in regulating ATPase activity and the flow of protons through the CF(0) complex. This chain is ATP synthase gamma chain, chloroplastic (ATPC), found in Spinacia oleracea (Spinach).